A 308-amino-acid polypeptide reads, in one-letter code: Porphobilinogen deaminase (308 aa).

The residue at position 241 (C241) is an S-(dipyrrolylmethanemethyl)cysteine.

It belongs to the HMBS family. Monomer. Dipyrromethane serves as cofactor.

The catalysed reaction is 4 porphobilinogen + H2O = hydroxymethylbilane + 4 NH4(+). It functions in the pathway porphyrin-containing compound metabolism; protoporphyrin-IX biosynthesis; coproporphyrinogen-III from 5-aminolevulinate: step 2/4. In terms of biological role, tetrapolymerization of the monopyrrole PBG into the hydroxymethylbilane pre-uroporphyrinogen in several discrete steps. The polypeptide is Porphobilinogen deaminase (Staphylococcus aureus (strain bovine RF122 / ET3-1)).